Here is a 712-residue protein sequence, read N- to C-terminus: Anaerobic ribonucleoside-triphosphate reductase (712 aa).

In terms of domain architecture, ATP-cone spans 3–92; it reads PHVMKRDGCK…EYRHDRDIER (90 aa). Residues 583–708 form the Glycine radical domain; it reads KKVNPYDKID…VKRRVKHLGN (126 aa). Cys644, Cys647, Cys662, and Cys665 together coordinate Zn(2+). Glycine radical is present on Gly681.

The protein belongs to the anaerobic ribonucleoside-triphosphate reductase family. In terms of assembly, homodimer. Forms a tetramer composed of two NrdD and two NrdG subunits.

It catalyses the reaction a ribonucleoside 5'-triphosphate + formate + H(+) = a 2'-deoxyribonucleoside 5'-triphosphate + CO2 + H2O. The catalysed reaction is formate + ATP + H(+) = dATP + CO2 + H2O. The enzyme catalyses CTP + formate + H(+) = dCTP + CO2 + H2O. It carries out the reaction GTP + formate + H(+) = dGTP + CO2 + H2O. It catalyses the reaction UTP + formate + H(+) = dUTP + CO2 + H2O. Activated under anaerobic conditions by NrdG, a tightly associated activase. Activation involves the formation of a glycyl radical at Gly-681. Exposure of the activated reductase to oxygen leads to C-terminal truncation and inactivation of the protein, by cleavage at the N-terminal side of Gly-681. The presence of zinc protects the protein from proteolysis and prevents the formation of disulfide bridges within it. The enzyme shows a basal activity in the absence of any effector, but reduction is stimulated up to 10-fold by an appropriate modulator (dGTP for ATP reduction, ATP for CTP and UTP reduction, and dTTP for GTP reduction). dGTP and dTTP inhibit the reduction of the incorrect substrate, and dATP inhibits reduction of all four. These modulators act as allosteric effectors. Its function is as follows. Catalyzes the conversion of ribonucleotides into deoxyribonucleotides, which are required for DNA synthesis and repair. Can reduce each of the four common ribonucleoside triphosphates. This Escherichia coli (strain K12) protein is Anaerobic ribonucleoside-triphosphate reductase.